A 190-amino-acid polypeptide reads, in one-letter code: Potassium-transporting ATPase KdpC subunit (190 aa).

Residues 10 to 30 (TFIFLLLITGGVYPLLTTVLG) form a helical membrane-spanning segment.

Belongs to the KdpC family. In terms of assembly, the system is composed of three essential subunits: KdpA, KdpB and KdpC.

It localises to the cell inner membrane. Functionally, part of the high-affinity ATP-driven potassium transport (or Kdp) system, which catalyzes the hydrolysis of ATP coupled with the electrogenic transport of potassium into the cytoplasm. This subunit acts as a catalytic chaperone that increases the ATP-binding affinity of the ATP-hydrolyzing subunit KdpB by the formation of a transient KdpB/KdpC/ATP ternary complex. The chain is Potassium-transporting ATPase KdpC subunit from Escherichia coli (strain 55989 / EAEC).